Consider the following 264-residue polypeptide: Cell cycle regulator CcrZ (264 aa).

Positions 32, 70, and 73 each coordinate ATP. The Brenner's motif [HXDhX3N] signature appears at 157-164 (HGDVRHSN). Asp159 serves as the catalytic Proton acceptor. An APH motif is present at residues 173–196 (IYLVDWDSVRLTDRMFDVAHMLCH).

It belongs to the aminoglycoside phosphotransferase family. As to quaternary structure, monomer in solution. Interacts with DnaA (via domains I (1-82) and III (111-326)). Interacts with DnaB. Interacts with FtsZ; the interaction is direct and ensures correct localization during the cell cycle.

It is found in the cytoplasm. The enzyme catalyses D-ribose + ATP = D-ribose 5-phosphate + ADP + H(+). It carries out the reaction 2-deoxy-D-ribose + ATP = 2-deoxy-D-ribose 5-phosphate + ADP + H(+). Its function is as follows. Plays a role in cell cycle regulation and chromosome integrity. Activates DnaA-dependent chromosomal DNA replication initiation ensuring that the chromosome is replicated at the right time during the cell cycle. May regulate replication initiation through phosphorylation of a possible second messenger or metabolite, and by interacting with replication initiation proteins. Has ATPase activity with D-ribose and 2-deoxy-D-ribose in vitro, but not with choline. Involved in DNA damage response. This Streptococcus pneumoniae serotype 2 (strain D39 / NCTC 7466) protein is Cell cycle regulator CcrZ.